Reading from the N-terminus, the 136-residue chain is ATP synthase epsilon chain, chloroplastic (136 aa).

The protein belongs to the ATPase epsilon chain family. F-type ATPases have 2 components, CF(1) - the catalytic core - and CF(0) - the membrane proton channel. CF(1) has five subunits: alpha(3), beta(3), gamma(1), delta(1), epsilon(1). CF(0) has three main subunits: a, b and c.

The protein localises to the plastid. The protein resides in the chloroplast thylakoid membrane. In terms of biological role, produces ATP from ADP in the presence of a proton gradient across the membrane. The sequence is that of ATP synthase epsilon chain, chloroplastic from Cucumis sativus (Cucumber).